Here is a 461-residue protein sequence, read N- to C-terminus: Photosystem II CP43 reaction center protein (461 aa).

Residues 1 to 2 constitute a propeptide that is removed on maturation; the sequence is ME. Thr-3 is subject to N-acetylthreonine. Thr-3 bears the Phosphothreonine mark. The next 5 helical transmembrane spans lie at 57-81, 122-143, 166-188, 243-263, and 279-300; these read LFEV…PHIA, LIGP…KDKN, KAMY…RIIS, KPWG…LSYS, and WFNN…ASQA. Glu-355 contacts [CaMn4O5] cluster. Residues 435–459 traverse the membrane as a helical segment; the sequence is RARAAAAGFEKGIDRDTEPVLSMKP.

Belongs to the PsbB/PsbC family. PsbC subfamily. As to quaternary structure, PSII is composed of 1 copy each of membrane proteins PsbA, PsbB, PsbC, PsbD, PsbE, PsbF, PsbH, PsbI, PsbJ, PsbK, PsbL, PsbM, PsbT, PsbX, PsbY, PsbZ, Psb30/Ycf12, at least 3 peripheral proteins of the oxygen-evolving complex and a large number of cofactors. It forms dimeric complexes. Binds multiple chlorophylls and provides some of the ligands for the Ca-4Mn-5O cluster of the oxygen-evolving complex. It may also provide a ligand for a Cl- that is required for oxygen evolution. PSII binds additional chlorophylls, carotenoids and specific lipids. serves as cofactor.

It is found in the plastid. It localises to the chloroplast thylakoid membrane. One of the components of the core complex of photosystem II (PSII). It binds chlorophyll and helps catalyze the primary light-induced photochemical processes of PSII. PSII is a light-driven water:plastoquinone oxidoreductase, using light energy to abstract electrons from H(2)O, generating O(2) and a proton gradient subsequently used for ATP formation. The sequence is that of Photosystem II CP43 reaction center protein from Oltmannsiellopsis viridis (Marine flagellate).